We begin with the raw amino-acid sequence, 432 residues long: Glutamate-1-semialdehyde 2,1-aminomutase (432 aa).

Lysine 267 is modified (N6-(pyridoxal phosphate)lysine).

The protein belongs to the class-III pyridoxal-phosphate-dependent aminotransferase family. HemL subfamily. In terms of assembly, homodimer. Requires pyridoxal 5'-phosphate as cofactor.

It localises to the cytoplasm. It carries out the reaction (S)-4-amino-5-oxopentanoate = 5-aminolevulinate. The protein operates within porphyrin-containing compound metabolism; protoporphyrin-IX biosynthesis; 5-aminolevulinate from L-glutamyl-tRNA(Glu): step 2/2. The protein is Glutamate-1-semialdehyde 2,1-aminomutase of Syntrophus aciditrophicus (strain SB).